A 403-amino-acid chain; its full sequence is S-adenosylmethionine synthase (403 aa).

Residue H16 coordinates ATP. Position 18 (D18) interacts with Mg(2+). E44 is a K(+) binding site. Residues E57 and Q100 each contribute to the L-methionine site. Residues 100-110 (QSPDIAQGVDR) are flexible loop. The interval 106–126 (QGVDRSYESRSGSASTDAHDL) is disordered. ATP contacts are provided by residues 176 to 178 (DGK), 248 to 249 (KF), D257, 263 to 264 (RK), A280, and K284. D257 provides a ligand contact to L-methionine. K288 is an L-methionine binding site.

It belongs to the AdoMet synthase family. As to quaternary structure, homotetramer; dimer of dimers. Mg(2+) serves as cofactor. The cofactor is K(+).

It localises to the cytoplasm. The enzyme catalyses L-methionine + ATP + H2O = S-adenosyl-L-methionine + phosphate + diphosphate. The protein operates within amino-acid biosynthesis; S-adenosyl-L-methionine biosynthesis; S-adenosyl-L-methionine from L-methionine: step 1/1. In terms of biological role, catalyzes the formation of S-adenosylmethionine (AdoMet) from methionine and ATP. The overall synthetic reaction is composed of two sequential steps, AdoMet formation and the subsequent tripolyphosphate hydrolysis which occurs prior to release of AdoMet from the enzyme. The polypeptide is S-adenosylmethionine synthase (Clavibacter michiganensis subsp. michiganensis (strain NCPPB 382)).